Reading from the N-terminus, the 207-residue chain is ATP-dependent Clp protease proteolytic subunit (207 aa).

Ser-111 (nucleophile) is an active-site residue. His-136 is an active-site residue.

The protein belongs to the peptidase S14 family. As to quaternary structure, fourteen ClpP subunits assemble into 2 heptameric rings which stack back to back to give a disk-like structure with a central cavity, resembling the structure of eukaryotic proteasomes.

It is found in the cytoplasm. The catalysed reaction is Hydrolysis of proteins to small peptides in the presence of ATP and magnesium. alpha-casein is the usual test substrate. In the absence of ATP, only oligopeptides shorter than five residues are hydrolyzed (such as succinyl-Leu-Tyr-|-NHMec, and Leu-Tyr-Leu-|-Tyr-Trp, in which cleavage of the -Tyr-|-Leu- and -Tyr-|-Trp bonds also occurs).. Its function is as follows. Cleaves peptides in various proteins in a process that requires ATP hydrolysis. Has a chymotrypsin-like activity. Plays a major role in the degradation of misfolded proteins. In Proteus mirabilis (strain HI4320), this protein is ATP-dependent Clp protease proteolytic subunit.